The primary structure comprises 269 residues: Phosphate import ATP-binding protein PstB (269 aa).

Residues 21–264 enclose the ABC transporter domain; the sequence is SEVRNLSFYY…PKNKQTEDYI (244 aa). 53 to 60 serves as a coordination point for ATP; that stretch reads GPSGCGKS.

The protein belongs to the ABC transporter superfamily. Phosphate importer (TC 3.A.1.7) family. In terms of assembly, the complex is composed of two ATP-binding proteins (PstB), two transmembrane proteins (PstC and PstA) and a solute-binding protein (PstS).

It localises to the cell inner membrane. The enzyme catalyses phosphate(out) + ATP + H2O = ADP + 2 phosphate(in) + H(+). Functionally, part of the ABC transporter complex PstSACB involved in phosphate import. Responsible for energy coupling to the transport system. The chain is Phosphate import ATP-binding protein PstB from Nitrosospira multiformis (strain ATCC 25196 / NCIMB 11849 / C 71).